Reading from the N-terminus, the 412-residue chain is UPF0761 membrane protein lpg0643 (412 aa).

6 helical membrane-spanning segments follow: residues Ala36 to Phe56, Leu99 to Glu119, Ala137 to Ala157, Ile177 to Val197, Gly210 to Ile230, and Ala241 to Leu261.

Belongs to the UPF0761 family.

It localises to the cell inner membrane. The sequence is that of UPF0761 membrane protein lpg0643 from Legionella pneumophila subsp. pneumophila (strain Philadelphia 1 / ATCC 33152 / DSM 7513).